Reading from the N-terminus, the 355-residue chain is Ribosomal RNA large subunit methyltransferase M (355 aa).

S-adenosyl-L-methionine is bound by residues serine 191, 224–227 (APGG), aspartate 243, aspartate 263, and aspartate 279. The active-site Proton acceptor is the lysine 308.

This sequence belongs to the class I-like SAM-binding methyltransferase superfamily. RNA methyltransferase RlmE family. RlmM subfamily. Monomer.

The protein localises to the cytoplasm. The catalysed reaction is cytidine(2498) in 23S rRNA + S-adenosyl-L-methionine = 2'-O-methylcytidine(2498) in 23S rRNA + S-adenosyl-L-homocysteine + H(+). Its function is as follows. Catalyzes the 2'-O-methylation at nucleotide C2498 in 23S rRNA. In Stenotrophomonas maltophilia (strain R551-3), this protein is Ribosomal RNA large subunit methyltransferase M.